Consider the following 425-residue polypeptide: Perilipin-2 (425 aa).

A2 carries the post-translational modification N-acetylalanine. Position 213 is a phosphoserine (S213). The residue at position 230 (Y230) is a Phosphotyrosine.

The protein belongs to the perilipin family. In terms of assembly, interacts with IRGC. Acylated; primarily with C14, C16 and C18 fatty acids. In terms of processing, phosphorylation at Tyr-230 by isoform 1 of CHKA (CHKalpha2) promotes dissociation from lipid droplets: dissociation is followed by recruitment of autophagosome machinery to lipid droplets and subsequent lipid droplet lipolysis. Post-translationally, polyubiquitination of Nt-acetylatable A-PLIN2 by MARCHF6 lead to degradation by 26S proteasomes. Adipose tissue specific. Expressed abundantly and preferentially in fat pads.

It is found in the membrane. Its subcellular location is the lipid droplet. Structural component of lipid droplets, which is required for the formation and maintenance of lipid storage droplets. In Mus musculus (Mouse), this protein is Perilipin-2.